The chain runs to 65 residues: Protein MalX (65 aa).

This Klebsiella pneumoniae protein is Protein MalX (malX).